The primary structure comprises 703 residues: Putative glycosyl hydrolase ecdE (703 aa).

Positions 1-21 are cleaved as a signal peptide; sequence MKLNIFASAILLCTSAFPVAA. Asp47 is an active-site residue. Asn104, Asn120, Asn293, Asn397, Asn443, and Asn641 each carry an N-linked (GlcNAc...) asparagine glycan.

Belongs to the glycosyl hydrolase 32 family.

This Aspergillus rugulosus (Emericella rugulosa) protein is Putative glycosyl hydrolase ecdE.